The chain runs to 72 residues: Translation initiation factor IF-1 (72 aa).

The S1-like domain maps to 1 to 72 (MAKDDVIEIE…TKGRITYRFK (72 aa)).

It belongs to the IF-1 family. In terms of assembly, component of the 30S ribosomal translation pre-initiation complex which assembles on the 30S ribosome in the order IF-2 and IF-3, IF-1 and N-formylmethionyl-tRNA(fMet); mRNA recruitment can occur at any time during PIC assembly.

It is found in the cytoplasm. Its function is as follows. One of the essential components for the initiation of protein synthesis. Stabilizes the binding of IF-2 and IF-3 on the 30S subunit to which N-formylmethionyl-tRNA(fMet) subsequently binds. Helps modulate mRNA selection, yielding the 30S pre-initiation complex (PIC). Upon addition of the 50S ribosomal subunit IF-1, IF-2 and IF-3 are released leaving the mature 70S translation initiation complex. The chain is Translation initiation factor IF-1 from Latilactobacillus sakei subsp. sakei (strain 23K) (Lactobacillus sakei subsp. sakei).